Consider the following 784-residue polypeptide: Phosphate transporter PHO1 homolog 1 (784 aa).

Over 1 to 387 (MVKFTKQFEG…HHRKESHSVT (387 aa)) the chain is Cytoplasmic. The SPX domain occupies 2–335 (VKFTKQFEGQ…GKQILPIYLK (334 aa)). A helical membrane pass occupies residues 388-408 (FFIGLFTGCFVALLAGYIIVA). Topologically, residues 409–429 (HLTGMYRQHSANTFYMETAYP) are extracellular. A helical transmembrane segment spans residues 430-450 (VLSMFGLLFLHLFLYGCNIFM). Over 451-474 (WRKARINYSFIFELGSKNELKYRD) the chain is Cytoplasmic. The helical transmembrane segment at 475-495 (VFLICTASMSAIAGVMFVHLS) threads the bilayer. Residues 496–507 (LLEKGYSFRQVQ) are Extracellular-facing. The helical transmembrane segment at 508-528 (VIPGLLLLGFLLILICPLNIF) threads the bilayer. The Cytoplasmic portion of the chain corresponds to 529–654 (YKSSRYRLIS…TKVAYEKERS (126 aa)). The region spanning 593–784 (MRVKYYRDLA…LPFREVDEED (192 aa)) is the EXS domain. A helical membrane pass occupies residues 655–675 (LGWLCLVVAMSSVATIYQLYW). Residues 676-703 (DFVKDWGLLQHNSNNPWLRNQLMLRQKS) are Extracellular-facing. The helical transmembrane segment at 704–724 (IYYFSMVLNLVLRLAWLQTVL) threads the bilayer. The Cytoplasmic portion of the chain corresponds to 725–784 (HSSFEHVDYRVTGLFLAALEVIRRGQWNFYRLENEHLNNAGKFRAVKTVPLPFREVDEED).

The protein belongs to the SYG1 (TC 2.A.94) family. Expressed in vascular cylinder of roots, leaves, stems, petals, sepals and filaments. Expressed in receptacle, stigma apex and anther connective tissue.

The protein localises to the cell membrane. Functionally, contributes to the loading of inorganic phosphate (Pi) into the root xylem vessels. The chain is Phosphate transporter PHO1 homolog 1 (PHO1-H1) from Arabidopsis thaliana (Mouse-ear cress).